We begin with the raw amino-acid sequence, 334 residues long: HTH-type transcriptional repressor PurR (334 aa).

Positions 2–56 (ATIKDVARMAGVSTTTVSHVINKTRFVAEATQKKVLAAVDDLNYAPSAVARSLKC) constitute an HTH lacI-type domain. The H-T-H motif DNA-binding region spans 4–23 (IKDVARMAGVSTTTVSHVIN). Residues 48-56 (SAVARSLKC) mediate DNA binding. 5 residues coordinate hypoxanthine: Phe-73, Lys-189, Thr-191, Phe-220, and Asp-274.

Homodimer.

It participates in purine metabolism; purine nucleotide biosynthesis [regulation]. In terms of biological role, is the main repressor of the genes involved in the de novo synthesis of purine nucleotides, regulating purB, purC, purEK, purF, purHD, purL, purMN and guaBA expression. PurR is allosterically activated to bind its cognate DNA by binding the purine corepressors, hypoxanthine or guanine, thereby effecting transcription repression. The protein is HTH-type transcriptional repressor PurR of Photobacterium profundum (strain SS9).